A 371-amino-acid polypeptide reads, in one-letter code: Putative glutamate--cysteine ligase 2 (371 aa).

Belongs to the glutamate--cysteine ligase type 2 family. YbdK subfamily.

It carries out the reaction L-cysteine + L-glutamate + ATP = gamma-L-glutamyl-L-cysteine + ADP + phosphate + H(+). Its function is as follows. ATP-dependent carboxylate-amine ligase which exhibits weak glutamate--cysteine ligase activity. This chain is Putative glutamate--cysteine ligase 2, found in Cupriavidus taiwanensis (strain DSM 17343 / BCRC 17206 / CCUG 44338 / CIP 107171 / LMG 19424 / R1) (Ralstonia taiwanensis (strain LMG 19424)).